The chain runs to 60 residues: UPF0337 protein asr4653 (60 aa).

This sequence belongs to the UPF0337 (CsbD) family.

The chain is UPF0337 protein asr4653 from Nostoc sp. (strain PCC 7120 / SAG 25.82 / UTEX 2576).